Consider the following 132-residue polypeptide: Small ribosomal subunit protein uS17c (132 aa).

A compositionally biased stretch (low complexity) spans 1–11 (MLLLSSPFVSV). 2 disordered regions span residues 1 to 23 (MLLLSSPFVSVSPPPPPLSSHGA) and 104 to 132 (PLPPRDTRRKSQLLPPLQSDDDQEPSSRE). A chloroplast-targeting transit peptide spans 1–31 (MLLLSSPFVSVSPPPPPLSSHGARPALRIEA). Residues 122 to 132 (SDDDQEPSSRE) are compositionally biased toward acidic residues.

It belongs to the universal ribosomal protein uS17 family. As to quaternary structure, part of the 30S ribosomal subunit.

Its subcellular location is the plastid. The protein localises to the chloroplast. One of the primary rRNA binding proteins, it binds specifically to the 5'-end of 16S ribosomal RNA. In terms of biological role, in the hcf60 mutation the Activator tag is inserted 17 base pars upstream of the initiation codon. This mutation is seedling lethal, due to plastid ribosome insufficiency. However under non-light stressed conditions photosynthesis and oxygen evolution can occur. The chain is Small ribosomal subunit protein uS17c (RPS17) from Zea mays (Maize).